Consider the following 475-residue polypeptide: Ribulose bisphosphate carboxylase large chain (475 aa).

A propeptide spanning residues 1 to 2 (MS) is cleaved from the precursor. Residue Pro3 is modified to N-acetylproline. Lys14 carries the post-translational modification N6,N6,N6-trimethyllysine. Substrate-binding residues include Asn123 and Thr173. The active-site Proton acceptor is Lys175. Position 177 (Lys177) interacts with substrate. Residues Lys201, Asp203, and Glu204 each contribute to the Mg(2+) site. An N6-carboxylysine modification is found at Lys201. His294 acts as the Proton acceptor in catalysis. Substrate-binding residues include Arg295, His327, and Ser379.

This sequence belongs to the RuBisCO large chain family. Type I subfamily. Heterohexadecamer of 8 large chains and 8 small chains; disulfide-linked. The disulfide link is formed within the large subunit homodimers. The cofactor is Mg(2+). Post-translationally, the disulfide bond which can form in the large chain dimeric partners within the hexadecamer appears to be associated with oxidative stress and protein turnover.

The protein localises to the plastid. It is found in the chloroplast. It catalyses the reaction 2 (2R)-3-phosphoglycerate + 2 H(+) = D-ribulose 1,5-bisphosphate + CO2 + H2O. It carries out the reaction D-ribulose 1,5-bisphosphate + O2 = 2-phosphoglycolate + (2R)-3-phosphoglycerate + 2 H(+). In terms of biological role, ruBisCO catalyzes two reactions: the carboxylation of D-ribulose 1,5-bisphosphate, the primary event in carbon dioxide fixation, as well as the oxidative fragmentation of the pentose substrate in the photorespiration process. Both reactions occur simultaneously and in competition at the same active site. This Mesostigma viride (Green alga) protein is Ribulose bisphosphate carboxylase large chain.